The chain runs to 199 residues: NAD(P)H dehydrogenase (quinone) (199 aa).

The Flavodoxin-like domain occupies 4 to 190 (ILVLYYSMYG…TIARYQGEHV (187 aa)). FMN contacts are provided by residues 10–15 (SMYGHI) and 79–81 (TRF). Tyrosine 12 lines the NAD(+) pocket. Substrate is bound at residue tryptophan 99. Residues 114–119 (STGTGG) and histidine 134 each bind FMN.

The protein belongs to the WrbA family. Requires FMN as cofactor.

The enzyme catalyses a quinone + NADH + H(+) = a quinol + NAD(+). It carries out the reaction a quinone + NADPH + H(+) = a quinol + NADP(+). In Serratia proteamaculans (strain 568), this protein is NAD(P)H dehydrogenase (quinone).